The sequence spans 825 residues: NT-3 growth factor receptor (825 aa).

The first 31 residues, 1-31 (MDVSLCPAKCSFWRIFLLGSVWLDYVGSVLA), serve as a signal peptide directing secretion. Disulfide bonds link cysteine 32-cysteine 38 and cysteine 36-cysteine 45. The Extracellular segment spans residues 32 to 429 (CPANCVCSKT…TVTHKPEEDT (398 aa)). N-linked (GlcNAc...) asparagine glycosylation is found at asparagine 68, asparagine 72, and asparagine 79. LRR repeat units follow at residues 104-125 (GLQKLTIKNSGLRSIQPRAFAK) and 128-149 (HLRYINLSSNRLTTLSWQLFQT). Residues asparagine 133 and asparagine 163 are each glycosylated (N-linked (GlcNAc...) asparagine). The LRRCT domain occupies 160 to 209 (NFFNCSCDIRWMQLWQEQGEAKLNSQNLYCINTDGSQLPLFRMNISQCDL). 2 disulfide bridges follow: cysteine 164/cysteine 189 and cysteine 166/cysteine 207. Residues asparagine 203, asparagine 218, asparagine 232, asparagine 259, asparagine 267, asparagine 272, and asparagine 294 are each glycosylated (N-linked (GlcNAc...) asparagine). Ig-like C2-type domains follow at residues 210 to 300 (PEIS…VALT) and 309 to 382 (SLEE…IAKN). Cysteine 231 and cysteine 284 are joined by a disulfide. A disulfide bridge links cysteine 320 with cysteine 362. 2 N-linked (GlcNAc...) asparagine glycosylation sites follow: asparagine 375 and asparagine 388. Residues 430–453 (FGVSIAVGLAAFACVLLVVLFVMI) form a helical membrane-spanning segment. At 454 to 825 (NKYGRRSKFG…ATPIYLDILG (372 aa)) the chain is on the cytoplasmic side. Serine 493 bears the Phosphoserine mark. Residue tyrosine 516 is modified to Phosphotyrosine; by autocatalysis. Residues 538 to 825 (IVLKRELGEG…ATPIYLDILG (288 aa)) form the Protein kinase domain. ATP contacts are provided by residues 544–552 (LGEGAFGKV) and lysine 572. Aspartate 679 serves as the catalytic Proton acceptor. A phosphotyrosine; by autocatalysis mark is found at tyrosine 705, tyrosine 709, and tyrosine 710.

This sequence belongs to the protein kinase superfamily. Tyr protein kinase family. Insulin receptor subfamily. Exists in a dynamic equilibrium between monomeric (low affinity) and dimeric (high affinity) structures. Binds SH2B2. Interacts with SQSTM1 and KIDINS220. Interacts with PTPRS. Interacts with MAPK8IP3/JIP3. In terms of processing, ligand-mediated auto-phosphorylation.

Its subcellular location is the membrane. It carries out the reaction L-tyrosyl-[protein] + ATP = O-phospho-L-tyrosyl-[protein] + ADP + H(+). Functionally, receptor tyrosine kinase involved in nervous system and probably heart development. Upon binding of its ligand NTF3/neurotrophin-3, NTRK3 autophosphorylates and activates different signaling pathways, including the phosphatidylinositol 3-kinase/AKT and the MAPK pathways, that control cell survival and differentiation. The polypeptide is NT-3 growth factor receptor (NTRK3) (Pan troglodytes (Chimpanzee)).